A 428-amino-acid polypeptide reads, in one-letter code: MLDSKLLRTDLETVAAKLKTRGFVLDTAQIDELEAKRKDWQVKTQELQAERNSRSKGIGKAKAAGEDIQPLLDEVANLGDQLEEAKHASDAIQAEIELIYAGIPNLPHDSTPVGNSEDDNVEVRQWGTPKTFDFDIKDHVDLAEARGWYDNDAAVKIASSRFSVLKGPMAKLQRALTQFMLDSHTDAGYEEVYVPFLVNQDSLHGTGQLPKFEADLYKIDKHEEHDTSDRDLYLIPTAEVPVTNLFRDEIIDEDTLPLKFTAHTPCFRSEAGSYGRDTKGLIRQHQFEKVEMVQIVHPDQSYEALESLTQQAESILQKLELPYRVMSLCTGDIGFSAAKTYDLEVWLPGQQAYREISSCSNFEDFQARRLKARFRKGQDKPQLAHTLNGSGLAVGRTLVAVLENYQNADGSITVPTALRSYLGGVEIL.

237 to 239 lines the L-serine pocket; the sequence is TAE. An ATP-binding site is contributed by 268–270; it reads RSE. Glu-291 serves as a coordination point for L-serine. 355–358 contacts ATP; it reads EISS. Ser-390 is a binding site for L-serine.

Belongs to the class-II aminoacyl-tRNA synthetase family. Type-1 seryl-tRNA synthetase subfamily. As to quaternary structure, homodimer. The tRNA molecule binds across the dimer.

It is found in the cytoplasm. The catalysed reaction is tRNA(Ser) + L-serine + ATP = L-seryl-tRNA(Ser) + AMP + diphosphate + H(+). It carries out the reaction tRNA(Sec) + L-serine + ATP = L-seryl-tRNA(Sec) + AMP + diphosphate + H(+). The protein operates within aminoacyl-tRNA biosynthesis; selenocysteinyl-tRNA(Sec) biosynthesis; L-seryl-tRNA(Sec) from L-serine and tRNA(Sec): step 1/1. Functionally, catalyzes the attachment of serine to tRNA(Ser). Is also able to aminoacylate tRNA(Sec) with serine, to form the misacylated tRNA L-seryl-tRNA(Sec), which will be further converted into selenocysteinyl-tRNA(Sec). The protein is Serine--tRNA ligase of Hydrogenovibrio crunogenus (strain DSM 25203 / XCL-2) (Thiomicrospira crunogena).